A 218-amino-acid chain; its full sequence is MASRNYRWELFAASLTLTLALIHLVEANSEGDALYALRRSLTDPDHVLQSWDPTLVNPCTWFHVTCNQDNRVTRVDLGNSNLSGHLAPELGKLEHLQYLELYKNNIQGTIPSELGNLKNLISLDLYNNNLTGIVPTSLGKLKSLVFLRLNDNRLTGPIPRALTAIPSLKVVDVSSNDLCGTIPTNGPFAHIPLQNFENNPRLEGPELLGLASYDTNCT.

The signal sequence occupies residues 1–27; sequence MASRNYRWELFAASLTLTLALIHLVEA. 4 LRR repeats span residues 94–117, 119–140, 141–165, and 167–190; these read EHLQ…LGNL, NLIS…SLGK, LKSL…LTAI, and SLKV…PFAH.

In terms of assembly, interacts with HIR1.

In terms of biological role, involved in plant defense response. This Arabidopsis thaliana (Mouse-ear cress) protein is Leucine-rich repeat protein 1.